Consider the following 479-residue polypeptide: Cardiolipin synthase A (479 aa).

The next 2 helical transmembrane spans lie at 8-28 (FFGY…LHAV) and 38-58 (IAWA…YLIF). PLD phosphodiesterase domains are found at residues 218-245 (VNFR…GDEY) and 392-419 (QPGF…DNRS). Residues His223, Lys225, Asp230, His397, Lys399, and Asp404 contribute to the active site.

The protein belongs to the phospholipase D family. Cardiolipin synthase subfamily. ClsA sub-subfamily.

Its subcellular location is the cell inner membrane. The catalysed reaction is 2 a 1,2-diacyl-sn-glycero-3-phospho-(1'-sn-glycerol) = a cardiolipin + glycerol. Its function is as follows. Catalyzes the reversible phosphatidyl group transfer from one phosphatidylglycerol molecule to another to form cardiolipin (CL) (diphosphatidylglycerol) and glycerol. This chain is Cardiolipin synthase A, found in Pseudomonas entomophila (strain L48).